The following is a 150-amino-acid chain: Large ribosomal subunit protein bL9 (150 aa).

The protein belongs to the bacterial ribosomal protein bL9 family.

Binds to the 23S rRNA. This is Large ribosomal subunit protein bL9 from Limosilactobacillus reuteri (strain DSM 20016) (Lactobacillus reuteri).